The primary structure comprises 287 residues: Zinc finger protein SNAI3 (287 aa).

The segment at 1–20 (MPRSFLVKTHSSHRVPNYGK) is SNAG domain. 4 C2H2-type zinc fingers span residues 147–169 (FECIHCHRPYHTLAGLARHQQLH), 178–200 (FTCRYCDKEYASLGALKMHIRTH), 204–226 (CICKVCGKAFSRPWLLQGHIRTH), and 232–254 (YTCSHCSRAFADRSNLRAHLQTH). Residues 260–282 (YRCAVCPKAFSRMSLLARHEEAG) form a C2H2-type 5; degenerate zinc finger.

Belongs to the snail C2H2-type zinc-finger protein family. In terms of tissue distribution, highly expressed in skeletal muscle and thymus. Lower expression in heart, lung and spleen.

The protein resides in the nucleus. In terms of biological role, seems to inhibit myoblast differentiation. Transcriptional repressor of E-box-dependent transactivation of downstream myogenic bHLHs genes. Binds preferentially to the canonical E-box sequences 5'-CAGGTG-3' and 5'-CACCTG-3'. The polypeptide is Zinc finger protein SNAI3 (Snai3) (Mus musculus (Mouse)).